A 178-amino-acid chain; its full sequence is RNA replicase polyprotein (178 aa).

This sequence belongs to the tymovirus NS35 RNA replicase polyprotein family.

It carries out the reaction RNA(n) + a ribonucleoside 5'-triphosphate = RNA(n+1) + diphosphate. This Physalis heterophylla (PhMV) protein is RNA replicase polyprotein.